A 72-amino-acid chain; its full sequence is Small ribosomal subunit protein bS18 (72 aa).

The protein belongs to the bacterial ribosomal protein bS18 family. Part of the 30S ribosomal subunit. Forms a tight heterodimer with protein bS6.

Binds as a heterodimer with protein bS6 to the central domain of the 16S rRNA, where it helps stabilize the platform of the 30S subunit. This Aquifex aeolicus (strain VF5) protein is Small ribosomal subunit protein bS18.